A 602-amino-acid polypeptide reads, in one-letter code: Bifunctional lycopene cyclase/phytoene synthase (602 aa).

The lycopene beta-cyclase stretch occupies residues 1–238 (MLTYMEVHLY…LVFASCATDR (238 aa)). 7 helical membrane-spanning segments follow: residues 7–27 (VHLY…KPFF), 35–55 (YIFL…YIVY), 69–89 (VIGY…LITV), 110–130 (PVFQ…TIAA), 142–162 (PFYG…LWIG), 173–193 (AVLF…QYAI), and 211–231 (LPSL…VLVF). The segment at 245–602 (IYITPMNHNK…RGKSQAFTVI (358 aa)) is phytoene synthase.

It in the N-terminal section; belongs to the lycopene beta-cyclase family. This sequence in the C-terminal section; belongs to the phytoene/squalene synthase family.

The protein localises to the membrane. It carries out the reaction all-trans-lycopene = gamma-carotene. The enzyme catalyses gamma-carotene = all-trans-beta-carotene. The catalysed reaction is 2 (2E,6E,10E)-geranylgeranyl diphosphate = 15-cis-phytoene + 2 diphosphate. The protein operates within carotenoid biosynthesis; beta-carotene biosynthesis. Its pathway is carotenoid biosynthesis; phytoene biosynthesis; all-trans-phytoene from geranylgeranyl diphosphate: step 1/1. In terms of biological role, bifunctional enzyme that catalyzes the reactions from geranylgeranyl diphosphate to phytoene (phytoene synthase) and lycopene to beta-carotene via the intermediate gamma-carotene (lycopene cyclase). The protein is Bifunctional lycopene cyclase/phytoene synthase of Phycomyces blakesleeanus (strain ATCC 8743b / DSM 1359 / FGSC 10004 / NBRC 33097 / NRRL 1555).